We begin with the raw amino-acid sequence, 415 residues long: MGEYTLRCAGCGNLLIGGAASCPLDGGLPRADYIERRFNPRKLPGIWSFIDWLPVDGWNRSTGASSVTYRSSGLAAELGLDSLYISFSGYWPERGALMRTCSFKELEAAPTMQMLRDRKAGETLVVASAGNTARAFAEVCSITDQPLILFVPVSSLDRIWTTVEPGRVLVVGVKGDYADAIKLADVLSSRSGFRAEGGARNIARRDGMGTVLLDHVRRFNSLPNHYFQAIGSGTGGIAVWEASMRIIEDGRFGERLPRLHLAQNTPCAPVYNMWHGMGSEESDFDAYGCPEGMHDDVLFNRNPPYAVPGGVRDAVISSGERIYGIDNSRAVSAQKLFEMSEGIDILPAASVAVAALVDAVESGFVENDDDILLNITGGGVKRLAEDHSRVKLKCDLTVGLRDSEDALSSIEEIFA.

Lysine 104 carries the N6-(pyridoxal phosphate)lysine modification. Residues asparagine 131 and threonine 376 each contribute to the pyridoxal 5'-phosphate site.

This sequence belongs to the threonine synthase family. Cysteate synthase subfamily. Homotrimer. The cofactor is pyridoxal 5'-phosphate.

It catalyses the reaction O-phospho-L-serine + sulfite + H(+) = L-cysteate + phosphate. The protein operates within cofactor biosynthesis; coenzyme M biosynthesis. Its function is as follows. Specifically catalyzes the beta-elimination of phosphate from L-phosphoserine and the beta-addition of sulfite to the dehydroalanine intermediate to produce L-cysteate. The polypeptide is Cysteate synthase (Methanothrix thermoacetophila (strain DSM 6194 / JCM 14653 / NBRC 101360 / PT) (Methanosaeta thermophila)).